Consider the following 173-residue polypeptide: Co-chaperone protein HscB homolog (173 aa).

The 73-residue stretch at Cys5–Met77 folds into the J domain.

The protein belongs to the HscB family. In terms of assembly, interacts with HscA and stimulates its ATPase activity.

Co-chaperone involved in the maturation of iron-sulfur cluster-containing proteins. Seems to help targeting proteins to be folded toward HscA. This Pseudomonas syringae pv. tomato (strain ATCC BAA-871 / DC3000) protein is Co-chaperone protein HscB homolog.